Consider the following 1666-residue polypeptide: Latent-transforming growth factor beta-binding protein 4 (1666 aa).

Positions 1–24 (MRRPGLGGPCPLLLLLLLPAATSA) are cleaved as a signal peptide. The EGF-like 1 domain occupies 148–180 (ARVLCPLICHNGGVCVKPDRCLCPPDFAGKFCQ). 6 disulfide bridges follow: cysteine 152/cysteine 162, cysteine 156/cysteine 168, cysteine 170/cysteine 179, cysteine 288/cysteine 310, cysteine 297/cysteine 323, and cysteine 311/cysteine 326. Residues 286–338 (GYCFRELRGSECASPLPGLRTQEVCCRGEGLAWGVHDCHPCAEHLRNSNQVSG) form the TB 1 domain. Residue asparagine 351 is glycosylated (N-linked (GlcNAc...) asparagine). One can recognise an EGF-like 2; calcium-binding domain in the interval 356–396 (DVDECATGGRCQHGECANTRGGYTCVCPDGFLLDSSRSSCI). 7 cysteine pairs are disulfide-bonded: cysteine 360–cysteine 371, cysteine 366–cysteine 380, cysteine 382–cysteine 395, cysteine 408–cysteine 430, cysteine 417–cysteine 443, cysteine 431–cysteine 446, and cysteine 432–cysteine 458. A TB 2 domain is found at 406 to 458 (GPCYRVLHDGGCSLPILRNITKQICCCSRVGKAWGRGCQLCPPYGSEGFREIC). Asparagine 424 is a glycosylation site (N-linked (GlcNAc...) asparagine). Residues 473 to 590 (YNTRPLNQDP…EIPESGPSSS (118 aa)) form a disordered region. Positions 491–502 (RVPPATPRPPTG) are enriched in pro residues. The span at 521–561 (PRPRPEPRPRPESRPRPEPRPRPEPRPQPESQPRPESRPRP) shows a compositional bias: basic and acidic residues. Over residues 562–573 (ESQPWPEFPLPS) the composition is skewed to pro residues. The segment covering 579–590 (GPEIPESGPSSS) has biased composition (low complexity). The region spanning 588–629 (SSSMCQRNPQVCGPGRCVPRPSGYTCACDPGFRLGPQGTRCI) is the EGF-like 3 domain. Intrachain disulfides connect cysteine 592/cysteine 604, cysteine 599/cysteine 613, cysteine 615/cysteine 628, cysteine 634/cysteine 646, cysteine 641/cysteine 655, cysteine 657/cysteine 670, cysteine 676/cysteine 688, cysteine 683/cysteine 697, cysteine 699/cysteine 712, cysteine 718/cysteine 730, cysteine 725/cysteine 739, cysteine 741/cysteine 750, cysteine 757/cysteine 769, cysteine 764/cysteine 778, cysteine 780/cysteine 793, cysteine 799/cysteine 811, cysteine 806/cysteine 820, cysteine 822/cysteine 835, cysteine 881/cysteine 893, cysteine 887/cysteine 902, cysteine 904/cysteine 918, cysteine 924/cysteine 936, cysteine 930/cysteine 945, cysteine 947/cysteine 960, cysteine 966/cysteine 977, cysteine 972/cysteine 986, cysteine 988/cysteine 1001, cysteine 1095/cysteine 1107, cysteine 1101/cysteine 1116, and cysteine 1118/cysteine 1131. The 42-residue stretch at 630 to 671 (DIDECRRVPTPCAPGRCENTPGSFRCVCGTGFQAGPRATECL) folds into the EGF-like 4; calcium-binding domain. Residues 672-713 (DVDECRRVPPPCDRGRCENTPGSFLCVCPAGYQAAPHGASCQ) form the EGF-like 5; calcium-binding domain. The EGF-like 6; calcium-binding domain maps to 714-751 (DVDECTQSPGLCGRGVCENLPGSFRCVCPAGFRGSACE). In terms of domain architecture, EGF-like 7; calcium-binding spans 753 to 794 (DVDECAQQPPPCGPGRCDNTAGSFHCACPAGFRSRGPGAPCQ). An EGF-like 8; calcium-binding domain is found at 795–836 (DVDECSRSPSPCAYGRCENTEGSFKCVCPTGFQPNAAGSECE). Residues 877–919 (DVDECSSGTPCGLHGQCTNTKGSFHCSCSTGYRAPSGQPGPCA) form the EGF-like 9; calcium-binding domain. The EGF-like 10; calcium-binding domain maps to 920 to 961 (DINECLEGDFCFPHGECLNTDGSFTCTCAPGYRPGPRGASCL). Positions 962 to 1002 (DVDECSEEDLCQSGICTNTDGSFECICPPGHRAGPDLASCL) constitute an EGF-like 11; calcium-binding domain. Residues 1091-1132 (DVDECRNRSFCGAHAMCQNLPGSFQCVCDQGYEGARDGRHCV) form the EGF-like 12; calcium-binding domain. N-linked (GlcNAc...) asparagine glycosylation occurs at asparagine 1097. The tract at residues 1171–1221 (TGRCVPPRAPAGTFPGSQPQAPASPSLPARPPAPPPPRRPSPPRQGPVSSG) is disordered. Low complexity predominate over residues 1185–1197 (PGSQPQAPASPSL). Residues 1198-1215 (PARPPAPPPPRRPSPPRQ) show a composition bias toward pro residues. The TB 3 domain occupies 1223–1277 (RECYFDTAAPDACDNILARNVTWQECCCTVGEGWGSGCRIQQCPGTETAEYQSLC). 10 disulfide bridges follow: cysteine 1225–cysteine 1248, cysteine 1235–cysteine 1260, cysteine 1249–cysteine 1265, cysteine 1250–cysteine 1277, cysteine 1299–cysteine 1312, cysteine 1307–cysteine 1321, cysteine 1323–cysteine 1336, cysteine 1342–cysteine 1354, cysteine 1349–cysteine 1363, and cysteine 1365–cysteine 1378. N-linked (GlcNAc...) asparagine glycosylation occurs at asparagine 1242. The region spanning 1295-1337 (DVDECQLFQDQVCKSGVCVNTAPGYSCYCSNGFYYHAHRLECV) is the EGF-like 13; calcium-binding domain. The region spanning 1338–1379 (DNDECADEEPACEGGRCVNTVGSYHCTCEPPLVLDGSRRRCV) is the EGF-like 14; calcium-binding domain. An N-linked (GlcNAc...) asparagine glycan is attached at asparagine 1381. The region spanning 1391–1444 (GVCWQEVGPDLVCSRPRLDRQATYTECCCLYGEAWGMDCALCPAQDSDDFEALC) is the TB 4 domain. 4 disulfide bridges follow: cysteine 1393–cysteine 1417, cysteine 1403–cysteine 1429, cysteine 1418–cysteine 1432, and cysteine 1419–cysteine 1444. The span at 1488 to 1500 (VLPYDPYPPPPGP) shows a compositional bias: pro residues. The disordered stretch occupies residues 1488–1566 (VLPYDPYPPP…SSERGSYTGA (79 aa)). Threonine 1564 carries the post-translational modification Phosphothreonine. 2 consecutive EGF-like domains span residues 1575-1615 (EAEE…MSCV) and 1616-1660 (DVNE…HHCA). 6 cysteine pairs are disulfide-bonded: cysteine 1579-cysteine 1590, cysteine 1585-cysteine 1599, cysteine 1601-cysteine 1614, cysteine 1620-cysteine 1635, cysteine 1630-cysteine 1644, and cysteine 1646-cysteine 1659.

Belongs to the LTBP family. As to quaternary structure, forms part of the large latent transforming growth factor beta precursor complex; removal is essential for activation of complex. Interacts with LTBP1 and TGFB1. Interacts with EFEMP2; this interaction promotes fibrillar deposition of EFEMP2. Post-translationally, contains hydroxylated asparagine residues.

Its subcellular location is the secreted. The protein resides in the extracellular space. The protein localises to the extracellular matrix. In terms of biological role, key regulator of transforming growth factor beta (TGFB1, TGFB2 and TGFB3) that controls TGF-beta activation by maintaining it in a latent state during storage in extracellular space. Associates specifically via disulfide bonds with the Latency-associated peptide (LAP), which is the regulatory chain of TGF-beta, and regulates integrin-dependent activation of TGF-beta. In Mus musculus (Mouse), this protein is Latent-transforming growth factor beta-binding protein 4 (Ltbp4).